Here is a 431-residue protein sequence, read N- to C-terminus: Ornithine aminotransferase, mitochondrial (431 aa).

The residue at position 286 (K286) is an N6-(pyridoxal phosphate)lysine.

The protein belongs to the class-III pyridoxal-phosphate-dependent aminotransferase family. As to quaternary structure, homotetramer. Requires pyridoxal 5'-phosphate as cofactor.

The protein localises to the mitochondrion matrix. The enzyme catalyses a 2-oxocarboxylate + L-ornithine = L-glutamate 5-semialdehyde + an L-alpha-amino acid. It participates in amino-acid biosynthesis; L-proline biosynthesis; L-glutamate 5-semialdehyde from L-ornithine: step 1/1. The polypeptide is Ornithine aminotransferase, mitochondrial (Oat) (Drosophila melanogaster (Fruit fly)).